The primary structure comprises 314 residues: tRNA dimethylallyltransferase (314 aa).

ATP is bound at residue 12-19 (GPTASGKT). 14 to 19 (TASGKT) contributes to the substrate binding site. Interaction with substrate tRNA regions lie at residues 37–40 (DSAQ) and 161–165 (QRIQR).

It belongs to the IPP transferase family. In terms of assembly, monomer. It depends on Mg(2+) as a cofactor.

The catalysed reaction is adenosine(37) in tRNA + dimethylallyl diphosphate = N(6)-dimethylallyladenosine(37) in tRNA + diphosphate. Functionally, catalyzes the transfer of a dimethylallyl group onto the adenine at position 37 in tRNAs that read codons beginning with uridine, leading to the formation of N6-(dimethylallyl)adenosine (i(6)A). In Nitrosococcus oceani (strain ATCC 19707 / BCRC 17464 / JCM 30415 / NCIMB 11848 / C-107), this protein is tRNA dimethylallyltransferase.